The primary structure comprises 206 residues: High frequency lysogenization protein HflD homolog (206 aa).

This sequence belongs to the HflD family.

It is found in the cytoplasm. The protein localises to the cell inner membrane. This is High frequency lysogenization protein HflD homolog from Ectopseudomonas mendocina (strain ymp) (Pseudomonas mendocina).